Here is a 225-residue protein sequence, read N- to C-terminus: PKHD-type hydroxylase YbiX (225 aa).

The 100-residue stretch at 78–177 folds into the Fe2OG dioxygenase domain; sequence TLSTPLFNRY…RVASFMWIQS (100 aa). Residues histidine 96, aspartate 98, and histidine 158 each contribute to the Fe cation site. Arginine 168 contributes to the 2-oxoglutarate binding site.

Fe(2+) is required as a cofactor. It depends on L-ascorbate as a cofactor.

The polypeptide is PKHD-type hydroxylase YbiX (Shigella sonnei (strain Ss046)).